The following is a 536-amino-acid chain: Arginine--tRNA ligase (536 aa).

Residues 119-129 (ANPTGFLHIGH) carry the 'HIGH' region motif.

This sequence belongs to the class-I aminoacyl-tRNA synthetase family. In terms of assembly, monomer.

It is found in the cytoplasm. The catalysed reaction is tRNA(Arg) + L-arginine + ATP = L-arginyl-tRNA(Arg) + AMP + diphosphate. This is Arginine--tRNA ligase from Mycoplasma mobile (strain ATCC 43663 / 163K / NCTC 11711) (Mesomycoplasma mobile).